The following is a 239-amino-acid chain: tRNA (guanine-N(1)-)-methyltransferase (239 aa).

S-adenosyl-L-methionine contacts are provided by residues Gly108 and 128 to 133; that span reads VGNFIV.

The protein belongs to the RNA methyltransferase TrmD family. In terms of assembly, homodimer.

The protein resides in the cytoplasm. The catalysed reaction is guanosine(37) in tRNA + S-adenosyl-L-methionine = N(1)-methylguanosine(37) in tRNA + S-adenosyl-L-homocysteine + H(+). Its function is as follows. Specifically methylates guanosine-37 in various tRNAs. This chain is tRNA (guanine-N(1)-)-methyltransferase, found in Helicobacter hepaticus (strain ATCC 51449 / 3B1).